Here is a 133-residue protein sequence, read N- to C-terminus: uncharacterized protein (133 aa).

Residues 36-56 form a helical membrane-spanning segment; it reads LPMLIALACIFLLLATCLLFM. The segment at 105 to 133 is disordered; that stretch reads HGRPTVPRQPLPGPEDNRSHCDYMESTKM. Basic and acidic residues predominate over residues 119-133; it reads EDNRSHCDYMESTKM.

The protein localises to the membrane. This is an uncharacterized protein from Homo sapiens (Human).